The following is a 1026-amino-acid chain: RecBCD enzyme subunit RecB (1026 aa).

One can recognise a UvrD-like helicase ATP-binding domain in the interval 1-438 (MSSFDIFSPT…LILDTNYRST (438 aa)). Residues 1-766 (MSSFDIFSPT…LANYANVTKH (766 aa)) form a DNA-binding and helicase activity, interacts with RecC region. 21–28 (ASAGTGKT) provides a ligand contact to ATP. Residues 815–1026 (SRTIHSFSST…KGNGFLQPGR (212 aa)) form a nuclease activity, interacts with RecD and RecA region. Positions 854, 940, and 953 each coordinate Mg(2+). The active-site For nuclease activity is D953.

The protein belongs to the helicase family. UvrD subfamily. Heterotrimer of RecB, RecC and RecD. All subunits contribute to DNA-binding. Interacts with RecA. It depends on Mg(2+) as a cofactor.

It catalyses the reaction Exonucleolytic cleavage (in the presence of ATP) in either 5'- to 3'- or 3'- to 5'-direction to yield 5'-phosphooligonucleotides.. The enzyme catalyses Couples ATP hydrolysis with the unwinding of duplex DNA by translocating in the 3'-5' direction.. It carries out the reaction ATP + H2O = ADP + phosphate + H(+). A helicase/nuclease that prepares dsDNA breaks (DSB) for recombinational DNA repair. Binds to DSBs and unwinds DNA via a highly rapid and processive ATP-dependent bidirectional helicase activity. Unwinds dsDNA until it encounters a Chi (crossover hotspot instigator) sequence from the 3' direction. Cuts ssDNA a few nucleotides 3' to the Chi site. The properties and activities of the enzyme are changed at Chi. The Chi-altered holoenzyme produces a long 3'-ssDNA overhang and facilitates RecA-binding to the ssDNA for homologous DNA recombination and repair. Holoenzyme degrades any linearized DNA that is unable to undergo homologous recombination. In the holoenzyme this subunit contributes ATPase, 3'-5' helicase, exonuclease activity and loads RecA onto ssDNA. The sequence is that of RecBCD enzyme subunit RecB from Chlamydia trachomatis serovar D (strain ATCC VR-885 / DSM 19411 / UW-3/Cx).